The chain runs to 635 residues: Putative adagio-like protein 2 (635 aa).

A compositionally biased stretch (acidic residues) spans 1–25 (MEWDSDSEGSGDEEEEEEEEEEEGV). The tract at residues 1 to 32 (MEWDSDSEGSGDEEEEEEEEEEEGVEVGGGGD) is disordered. The 80-residue stretch at 44–123 (ALAIEGVLGA…TDIRRCLEEG (80 aa)) folds into the PAS domain. Position 91 is an S-4a-FMN cysteine (Cys-91). The 47-residue stretch at 209–255 (SDLFLLSDEVLCQKILSRLSPRDIASVNSVCKRLYHLTRNDDLWRMV) folds into the F-box domain. 4 Kelch repeats span residues 371–421 (RLVL…TLDG), 423–474 (KLVV…VYDG), 476–530 (KILM…PPPR), and 542–594 (RILI…VVGG).

The protein belongs to the ADAGIO family. FMN binds covalently to cysteine after exposure to blue light and is reversed in the dark.

The protein resides in the nucleus. It functions in the pathway protein modification; protein ubiquitination. Functionally, component of an E3 ubiquitin ligase complex that plays a central role in blue light-dependent circadian cycles. Acts as a blue light photoreceptor, due to the presence of FMN, that mediates light-regulated protein degradation of critical clock components by targeting them to the proteasome complex. The sequence is that of Putative adagio-like protein 2 from Oryza sativa subsp. japonica (Rice).